A 435-amino-acid chain; its full sequence is UPF0597 protein ASA_0240 (435 aa).

This sequence belongs to the UPF0597 family.

The polypeptide is UPF0597 protein ASA_0240 (Aeromonas salmonicida (strain A449)).